A 491-amino-acid chain; its full sequence is Neuronal acetylcholine receptor subunit beta-2 (491 aa).

Positions 1-18 (MALLRVLCLLAALRRSLC) are cleaved as a signal peptide. Over 19 to 226 (TDTEERLVEY…ITYDFIIRRK (208 aa)) the chain is Extracellular. N-linked (GlcNAc...) asparagine glycans are attached at residues N44 and N161. A disulfide bridge links C148 with C162. A helical transmembrane segment spans residues 227-251 (PLFYTINLIIPCILITSLAILVFYL). The Cytoplasmic portion of the chain corresponds to 252 to 258 (PSDCGEK). The chain crosses the membrane as a helical span at residues 259-277 (MTLCISVLLALTVFLLLIS). Residues 278-292 (KIVPPTSLDVPLVGK) lie on the Extracellular side of the membrane. A helical transmembrane segment spans residues 293-314 (YLMFTMVLVTFSIVTSVCVLNV). The Cytoplasmic segment spans residues 315-449 (HHRSPTTHTM…WKYVAMVIDR (135 aa)). The chain crosses the membrane as a helical span at residues 450 to 468 (LFLWIFVFVCVFGTVGMFL).

It belongs to the ligand-gated ion channel (TC 1.A.9) family. Acetylcholine receptor (TC 1.A.9.1) subfamily. Beta-2/CHRNB2 sub-subfamily. Neuronal AChR is a heteropentamer composed of two different types of subunits: alpha and beta. CHRNB2/Beta-2 subunit can be combined to CHRNA2/alpha-2, CHRNA3/alpha-3 or CHRNA4/alpha-4, CHRNA5/alpha-5, CHRNA6/alpha-6 and CHRNB3/beta-3 to give rise to functional receptors.

It localises to the synaptic cell membrane. It is found in the cell membrane. The enzyme catalyses Ca(2+)(in) = Ca(2+)(out). The catalysed reaction is K(+)(in) = K(+)(out). It carries out the reaction Na(+)(in) = Na(+)(out). With respect to regulation, activated by a myriad of ligands such as acetylcholine, cytisine, nicotine, choline and epibatidine. nAChR activity is inhibited by the antagonist alpha-conotoxins BuIA, PnIA, PnIC, GID and MII, small disulfide-constrained peptides from cone snails. In terms of biological role, component of neuronal acetylcholine receptors (nAChRs) that function as pentameric, ligand-gated cation channels with high calcium permeability among other activities. nAChRs are excitatory neurotrasnmitter receptors formed by a collection of nAChR subunits known to mediate synaptic transmission in the nervous system and the neuromuscular junction. Each nAchR subunit confers differential attributes to channel properties, including activation, deactivation and desensitization kinetics, pH sensitivity, cation permeability, and binding to allosteric modulators. CHRNB2 forms heteropentameric neuronal acetylcholine receptors with CHRNA2, CHRNA3, CHRNA4 and CHRNA6, as well as CHRNA5 and CHRNB3 as accesory subunits. This is Neuronal acetylcholine receptor subunit beta-2 (CHRNB2) from Gallus gallus (Chicken).